A 246-amino-acid polypeptide reads, in one-letter code: Orotidine 5'-phosphate decarboxylase (246 aa).

Substrate is bound by residues D22, K44, 71–80, T131, R192, Q201, G221, and R222; that span reads DLKFHDIPNT. K73 serves as the catalytic Proton donor.

The protein belongs to the OMP decarboxylase family. Type 1 subfamily. In terms of assembly, homodimer.

The catalysed reaction is orotidine 5'-phosphate + H(+) = UMP + CO2. The protein operates within pyrimidine metabolism; UMP biosynthesis via de novo pathway; UMP from orotate: step 2/2. Functionally, catalyzes the decarboxylation of orotidine 5'-monophosphate (OMP) to uridine 5'-monophosphate (UMP). In Enterobacter sp. (strain 638), this protein is Orotidine 5'-phosphate decarboxylase.